Here is a 302-residue protein sequence, read N- to C-terminus: Formylmethanofuran--tetrahydromethanopterin formyltransferase (302 aa).

This sequence belongs to the FTR family. Homotetramer.

The protein localises to the cytoplasm. It carries out the reaction N-formylmethanofuran + 5,6,7,8-tetrahydromethanopterin + H(+) = N(5)-formyl-5,6,7,8-tetrahydromethanopterin + methanofuran. It functions in the pathway one-carbon metabolism; formaldehyde degradation; formate from formaldehyde (H(4)MPT route): step 4/5. Its function is as follows. Catalyzes the transfer of a formyl group from 5-formyl tetrahydromethanopterin (5-formyl-H(4)MPT) to methanofuran (MFR) to produce formylmethanofuran (formyl-MFR) and tetrahydromethanopterin (H(4)MPT). The protein is Formylmethanofuran--tetrahydromethanopterin formyltransferase of Methylobacillus flagellatus (strain ATCC 51484 / DSM 6875 / VKM B-1610 / KT).